The chain runs to 330 residues: Putative glycosyltransferase ORF330 (330 aa).

It belongs to the glycosyltransferase group 1 family. Glycosyltransferase 4 subfamily.

The polypeptide is Putative glycosyltransferase ORF330 (Acidianus filamentous virus 2 (isolate Italy/Pozzuoli) (AFV-2)).